We begin with the raw amino-acid sequence, 153 residues long: Calmodulin-like protein 3 (153 aa).

4 consecutive EF-hand domains span residues 1–36 (MDQA…LGIY), 37–72 (IPDK…IMEE), 74–109 (DEEE…LGLK), and 112–147 (RTLE…GGFA). Asp14, Asn16, Asp18, Lys20, Glu25, Asp50, Asn52, Asp54, Tyr56, Glu61, Asp87, Asn89, Asp91, Glu98, Asp125, Asp127, Asp129, Met131, and Glu136 together coordinate Ca(2+).

It belongs to the calmodulin family.

Its function is as follows. Potential calcium sensor. This is Calmodulin-like protein 3 (CML3) from Arabidopsis thaliana (Mouse-ear cress).